Here is a 351-residue protein sequence, read N- to C-terminus: Phenylacetaldoxime dehydratase (351 aa).

The protein belongs to the heme-containing dehydratase family. Monomer. Heme b serves as cofactor.

It carries out the reaction (Z)-phenylacetaldehyde oxime = phenylacetonitrile + H2O. Catalyzes the stoichiometric dehydration of Z-phenylacetaldoxime to phenylacetonitrile. Prefers the Z-form of phenylacetaldoxime over its E-isomer. The polypeptide is Phenylacetaldoxime dehydratase (Bacillus sp. (strain OxB-1)).